A 163-amino-acid chain; its full sequence is Halocyanin (163 aa).

The signal sequence occupies residues 1–24; that stretch reads MKDISRRRFVLGTGATVAAATLAG. N-acetylcysteine is present on Cys-25. The S-archaeol cysteine moiety is linked to residue Cys-25. The segment covering 26–38 has biased composition (gly residues); it reads NGNGNGNGNGNGN. Residues 26 to 48 are disordered; that stretch reads NGNGNGNGNGNGNGEPDTPEGRA. Positions 48-163 constitute a Plastocyanin-like domain; the sequence is ADQFLTDNDA…QGMYGAVIVE (116 aa). Cu cation-binding residues include His-110, Cys-148, His-151, and Met-156.

The protein localises to the cell membrane. In terms of biological role, electron donor. Binds one copper ion. This Natronomonas pharaonis (Natronobacterium pharaonis) protein is Halocyanin (hcy).